A 442-amino-acid chain; its full sequence is 3-ketoacyl-CoA thiolase (442 aa).

The active-site Acyl-thioester intermediate is the C105. Catalysis depends on proton acceptor residues H398 and C428.

The protein belongs to the thiolase-like superfamily. Thiolase family. Heterotetramer of two alpha chains (FadJ) and two beta chains (FadI).

It localises to the cytoplasm. It carries out the reaction an acyl-CoA + acetyl-CoA = a 3-oxoacyl-CoA + CoA. Its pathway is lipid metabolism; fatty acid beta-oxidation. Its function is as follows. Catalyzes the final step of fatty acid oxidation in which acetyl-CoA is released and the CoA ester of a fatty acid two carbons shorter is formed. The sequence is that of 3-ketoacyl-CoA thiolase from Aliivibrio fischeri (strain MJ11) (Vibrio fischeri).